The primary structure comprises 695 residues: MAP kinase phosphatase with leucine-rich repeats protein 2 (695 aa).

LRR repeat units lie at residues 101–122, 124–145, 147–167, 170–191, 193–214, 215–235, 239–260, 262–283, 286–307, and 309–330; these read SLKS…ITLL, NLNH…LSQL, SLET…NVCK, SLTS…FLNL, NLKD…LPNN, IEKL…SLIR, SLTT…LSCL, NVKT…VLGS, SLVT…VILL, and NLRI…IPTE. Residues 413–426 are compositionally biased toward low complexity; that stretch reads SENNEINENNQLLT. Disordered regions lie at residues 413–438 and 492–519; these read SENN…KNDS and QEQL…QQQQ. A Tyrosine-protein phosphatase domain is found at 556-695; sequence VPDLIIDKLY…LKKFEKDLFK (140 aa). Residue cysteine 639 is the Phosphocysteine intermediate of the active site.

Belongs to the protein-tyrosine phosphatase family. Non-receptor class dual specificity subfamily.

It carries out the reaction O-phospho-L-tyrosyl-[protein] + H2O = L-tyrosyl-[protein] + phosphate. The enzyme catalyses O-phospho-L-seryl-[protein] + H2O = L-seryl-[protein] + phosphate. It catalyses the reaction O-phospho-L-threonyl-[protein] + H2O = L-threonyl-[protein] + phosphate. In terms of biological role, probable phosphatase with dual specificity toward Ser/Thr and Tyr-containing proteins. This chain is MAP kinase phosphatase with leucine-rich repeats protein 2 (mpl2), found in Dictyostelium discoideum (Social amoeba).